Here is a 531-residue protein sequence, read N- to C-terminus: 2,3-bisphosphoglycerate-independent phosphoglycerate mutase (531 aa).

Positions 13 and 63 each coordinate Mn(2+). Ser63 serves as the catalytic Phosphoserine intermediate. Residues His124, 154-155 (RD), Arg187, Arg193, 261-264 (RPDR), and Lys342 contribute to the substrate site. Mn(2+)-binding residues include Asp420, His424, Asp462, His463, and His480.

The protein belongs to the BPG-independent phosphoglycerate mutase family. As to quaternary structure, monomer. Mn(2+) serves as cofactor.

The enzyme catalyses (2R)-2-phosphoglycerate = (2R)-3-phosphoglycerate. It participates in carbohydrate degradation; glycolysis; pyruvate from D-glyceraldehyde 3-phosphate: step 3/5. Catalyzes the interconversion of 2-phosphoglycerate and 3-phosphoglycerate. The polypeptide is 2,3-bisphosphoglycerate-independent phosphoglycerate mutase (Mycoplasma capricolum subsp. capricolum (strain California kid / ATCC 27343 / NCTC 10154)).